The primary structure comprises 368 residues: tRNA-specific 2-thiouridylase MnmA (368 aa).

ATP contacts are provided by residues 12–19 and methionine 38; that span reads GMSGGVDS. The segment at 98-100 is interaction with target base in tRNA; the sequence is NPD. The active-site Nucleophile is cysteine 103. The cysteines at positions 103 and 200 are disulfide-linked. An ATP-binding site is contributed by glycine 128. The tract at residues 150–152 is interaction with tRNA; that stretch reads KDQ. Residue cysteine 200 is the Cysteine persulfide intermediate of the active site. Positions 311–312 are interaction with tRNA; it reads RY.

It belongs to the MnmA/TRMU family.

The protein localises to the cytoplasm. It catalyses the reaction S-sulfanyl-L-cysteinyl-[protein] + uridine(34) in tRNA + AH2 + ATP = 2-thiouridine(34) in tRNA + L-cysteinyl-[protein] + A + AMP + diphosphate + H(+). Catalyzes the 2-thiolation of uridine at the wobble position (U34) of tRNA, leading to the formation of s(2)U34. In Aeromonas salmonicida (strain A449), this protein is tRNA-specific 2-thiouridylase MnmA.